Reading from the N-terminus, the 407-residue chain is Large ribosomal subunit protein uL3-like (407 aa).

Residues 1–31 (MSHRKFSAPRHGHLGFLPHKRSHRHRGKVKT) are compositionally biased toward basic residues. Disordered stretches follow at residues 1 to 35 (MSHR…WPRD) and 383 to 407 (QEKR…SGDL). Basic and acidic residues predominate over residues 394-407 (KHLEKEKPETSGDL).

It belongs to the universal ribosomal protein uL3 family. In terms of assembly, component of the large ribosomal subunit in striated muscle cells.

Heart- and skeletal muscle-specific component of the ribosome, which regulates muscle function. Component of the large ribosomal subunit in striated muscle cells: replaces the RPL3 paralog in the ribosome in these cells. The ribosome is a large ribonucleoprotein complex responsible for the synthesis of proteins in the cell. Inhibits myotube growth and muscle function. The chain is Large ribosomal subunit protein uL3-like (RPL3L) from Bos taurus (Bovine).